The chain runs to 516 residues: Nondiscriminating glutamyl-tRNA synthetase EARS2, mitochondrial (516 aa).

A mitochondrion-targeting transit peptide spans 1–39 (MRPAFIRGKWLSRTLELATGLGRRTCSSRESGREVRVRF). 38–40 (RFA) is an L-glutamate binding site. The 'HIGH' region signature appears at 43–51 (PTGFLHLGG). His-48 contributes to the ATP binding site. Residues Glu-74, 226–230 (YHLAN), and Arg-244 each bind L-glutamate. ATP-binding positions include Glu-247 and 282 to 286 (KLSKR). A 'KMSKS' region motif is present at residues 282–286 (KLSKR).

It belongs to the class-I aminoacyl-tRNA synthetase family. Glutamate--tRNA ligase type 1 subfamily.

The protein resides in the mitochondrion matrix. It catalyses the reaction tRNA(Glx) + L-glutamate + ATP = L-glutamyl-tRNA(Glx) + AMP + diphosphate. The catalysed reaction is tRNA(Glu) + L-glutamate + ATP = L-glutamyl-tRNA(Glu) + AMP + diphosphate. The enzyme catalyses tRNA(Gln) + L-glutamate + ATP = L-glutamyl-tRNA(Gln) + AMP + diphosphate. In terms of biological role, non-discriminating glutamyl-tRNA synthetase that catalyzes aminoacylation of both mitochondrial tRNA(Glu) and tRNA(Gln) and participates in RNA aminoacylation for mitochondrial protein translation. Attachs glutamate to tRNA(Glu) or tRNA(Gln) in a two-step reaction: glutamate is first activated by ATP to form Glu-AMP and then transferred to the acceptor end of tRNA(Glu) or tRNA(Gln). The chain is Nondiscriminating glutamyl-tRNA synthetase EARS2, mitochondrial from Xenopus tropicalis (Western clawed frog).